Reading from the N-terminus, the 600-residue chain is Monooxygenase ptmN (600 aa).

This sequence belongs to the FMO family. Requires FAD as cofactor.

It participates in secondary metabolite biosynthesis. Monooxygenase; part of the gene cluster that mediates the biosynthesis of the indole diterpenes penitrems. The geranylgeranyl diphosphate (GGPP) synthase ptmG catalyzes the first step in penitrem biosynthesis via conversion of farnesyl pyrophosphate and isopentyl pyrophosphate into geranylgeranyl pyrophosphate (GGPP). Condensation of indole-3-glycerol phosphate with GGPP by the prenyl transferase ptmC then forms 3-geranylgeranylindole (3-GGI). Epoxidation by the FAD-dependent monooxygenase ptmM leads to a epoxidized-GGI that is substrate of the terpene cyclase ptmB for cyclization to yield paspaline. Paspaline is subsequently converted to 13-desoxypaxilline by the cytochrome P450 monooxygenase ptmP, the latter being then converted to paxilline by the cytochrome P450 monooxygenase ptmQ. Paxilline is converted to beta-paxitriol via C-10 ketoreduction by the short-chain dehydrogenase ptmH which can be monoprenylated at the C-20 by the indole diterpene prenyltransferase ptmD. A two-step elimination (acetylation and elimination) process performed by the O-acetyltransferase ptmV and ptmI leads to the production of the prenylated form of penijanthine. The FAD-linked oxidoreductase ptmO then converts the prenylated form of penijanthine into PC-M5 which is in turn transformed into PC-M4 by the aromatic dimethylallyltransferase ptmE. Five sequential oxidative transformations performed by the cytochrome P450 monooxygenases ptmK, ptmU, ptmL, ptmN and ptmJ yield the various penitrem compounds. PtmK, ptmU and ptmM are involved in the formation of the key bicyclic ring of penitrem C via the formation of the intermediates secopenitrem D and penitrem D. PtmL catalyzes the epoxidation of penitrem D and C to yield penitrem B and F, respectively. PtmJ catalyzes the last benzylic hydroxylation to convert penitrem B to prenitrem E and penitrem F to penitrem A. This is Monooxygenase ptmN from Penicillium ochrochloron.